We begin with the raw amino-acid sequence, 1078 residues long: Rho family-interacting cell polarization regulator 2 (1078 aa).

2 positions are modified to phosphoserine: serine 46 and serine 62. Residues 80-138 (MHNLGHKNNNTPKEPQPKRVEEVYRALKNGLDEYLEFHQTELDKLTAQLKDMKRNSRLG) form an involved in cell filopodia formation region. A coiled-coil region spans residues 108–137 (NGLDEYLEFHQTELDKLTAQLKDMKRNSRL). The residue at position 366 (serine 366) is a Phosphoserine. A compositionally biased stretch (polar residues) spans 488-508 (SSLSSQNEGTEDSSSASSRNS). A disordered region spans residues 488-534 (SSLSSQNEGTEDSSSASSRNSLGEDHEPKSHPKSDTVEPGKPGVATR). The segment covering 509 to 525 (LGEDHEPKSHPKSDTVE) has biased composition (basic and acidic residues). A Phosphoserine modification is found at serine 582.

It belongs to the RIPOR family. Homooligomer; homooligomerization is regulated by RHOC and leads to the formation of concatemers through the association of N- and C-termini. Interacts (phosphorylated form) with 14-3-3 proteins; these interactions occur during myogenic cell differentiation and also induces T cell proliferation arrest. Interacts (phosphorylated form) with HDAC6; this interaction occurs during early myogenic differentiation, prevents HDAC6 to deacetylate tubulin and also induces T cell proliferation arrest. Interacts with DYSF; this interaction occurs during early myogenic differentiation. Interacts with MYOF. Interacts (via active GTP- or inactive GDP-bound forms) with RHOA; this interaction is direct, blocks the loading of GTP to RHOA and decreases upon chemokine CCL19 stimulation in primary T lymphocytes. Interacts with RHOC. Interacts (via phosphorylated form) with YWHAB; this interaction occurs in a chemokine-dependent manner and does not compete for binding of RIPOR2 with RHOA nor blocks inhibition of RIPOR2-mediated RHOA activity. Interacts with YWHAE. Interacts with YWHAQ. Phosphorylated. Chemokine-induced phosphorylation in neutrophils occurs in a PKC- and AKT-dependent manner, resulting in RIPOR2 interaction with YWHAB and stabilization. Phosphorylated by PKCA, AKT1 and MAPKAPK1A; in vitro. As to expression, expressed in the cochlea. Expressed in inner hair cells and outer hair cells and Hensen's cells (at protein level). Expressed in the brain, cerebellum, spinal cord, retina, heart, spleen liver, kidney, bladder, muscle and lung. Expressed in the cochlea of the inner ear.

It is found in the cytoplasm. Its subcellular location is the cytoskeleton. The protein resides in the cell projection. The protein localises to the filopodium. It localises to the stereocilium. It is found in the stereocilium membrane. Its subcellular location is the apical cell membrane. In terms of biological role, acts as an inhibitor of the small GTPase RHOA and plays several roles in the regulation of myoblast and hair cell differentiation, lymphocyte T proliferation and neutrophil polarization. Plays a role in fetal mononuclear myoblast differentiation by promoting filopodia and myotube formation. Maintains naive T lymphocytes in a quiescent state and prevents chemokine-induced T lymphocyte responses, such as cell adhesion, polarization and migration. Involved also in the regulation of neutrophil polarization, chemotaxis and adhesion. Required for normal development of inner and outer hair cell stereocilia within the cochlea of the inner ear. Plays a role for maintaining the structural organization of the basal domain of stereocilia. Involved in mechanosensory hair cell function. Required for normal hearing. The protein is Rho family-interacting cell polarization regulator 2 of Mus musculus (Mouse).